A 175-amino-acid polypeptide reads, in one-letter code: Co-chaperone protein daf-41 (175 aa).

The CS domain maps to 2–89; sequence AKQPTVLWAQ…KTPAWWPRLL (88 aa). Positions 109-175 are disordered; the sequence is DEDDEAEDAG…EEEGKNGTRA (67 aa). The segment covering 148 to 168 has biased composition (acidic residues); that stretch reads GLEDDEEDDDMPDLEDNEEEE.

It belongs to the p23/wos2 family. In terms of tissue distribution, expressed in anterior and posterior neurons including ASE, AWC, ASI and ADL amphids and phasmid sensory neurons, peripheral neurons and ventral cord motorneurons. Additionally expressed in body wall muscle, pharynx, vulva, germ cells and intestine.

Its function is as follows. Co-chaperone for hsp90/daf-21. Involved in regulation of longevity, larval entry and exit from the dauer stage of development and response to environmental cues, such as oxidative stress, in a temperature-dependent manner. Role in daf-16 and hsf-1 inhibition at elevated temperatures. This is Co-chaperone protein daf-41 from Caenorhabditis elegans.